A 291-amino-acid chain; its full sequence is HTH-type transcriptional activator AmpR (291 aa).

One can recognise an HTH lysR-type domain in the interval 6–63 (LPLNSLRAFEAAARHLSFTHAAIELNVTHSAISQHVKTLEQHLNCQLFVRVSRGLMLT). The H-T-H motif DNA-binding region spans 23–42 (FTHAAIELNVTHSAISQHVK).

It belongs to the LysR transcriptional regulatory family.

Its subcellular location is the cytoplasm. In terms of biological role, this protein is a positive regulator of gene expression of cephalosporinase (AmpC). In Enterobacter cloacae, this protein is HTH-type transcriptional activator AmpR (ampR).